We begin with the raw amino-acid sequence, 130 residues long: Small ribosomal subunit protein uS9 (130 aa).

Belongs to the universal ribosomal protein uS9 family.

The sequence is that of Small ribosomal subunit protein uS9 from Shewanella piezotolerans (strain WP3 / JCM 13877).